A 96-amino-acid polypeptide reads, in one-letter code: MKIRPLQDRLIVKRVAEENKTKGGLFIPDTAKEKPLEGKVIAVGNGKVQEDGKVRPLDIKAGDTILFSKYAGTEIKLDGEEHLILREEDVLGVIEK.

This sequence belongs to the GroES chaperonin family. In terms of assembly, heptamer of 7 subunits arranged in a ring. Interacts with the chaperonin GroEL.

The protein localises to the cytoplasm. Its function is as follows. Together with the chaperonin GroEL, plays an essential role in assisting protein folding. The GroEL-GroES system forms a nano-cage that allows encapsulation of the non-native substrate proteins and provides a physical environment optimized to promote and accelerate protein folding. GroES binds to the apical surface of the GroEL ring, thereby capping the opening of the GroEL channel. This Myxococcus xanthus (strain DK1622) protein is Co-chaperonin GroES.